Here is a 258-residue protein sequence, read N- to C-terminus: uncharacterized protein (258 aa).

The next 6 membrane-spanning stretches (helical) occupy residues 21-41, 73-93, 119-139, 153-173, 182-202, and 229-249; these read LIWLPIAMMIVGLTQPLTIYY, LSQFNTLGMALVIFSVMGSVA, WLIQSVIGIMSFAAGYGLAYY, FAASLGLYALWVIFIVTAGLA, GAAAACGIGLTAAVSFAVSLF, and FFGWSLTFSILCIMLLAVFSV.

It is found in the cell membrane. This is an uncharacterized protein from Bacillus subtilis (strain 168).